The primary structure comprises 125 residues: MASRMGMVAIMSLFVYAIVVPTSVNANAWQTDDKPGVNRNMEMQQQQGGFIGHRPRLASFNRASNQEGDRKRTVPSGPNHKHNNIPSHTPHHPPSYVQALYEDDRTITSPGPSKSIGPPPLPDRY.

The signal sequence occupies residues 1–26; the sequence is MASRMGMVAIMSLFVYAIVVPTSVNA. The tract at residues 45–125 is disordered; it reads QQQGGFIGHR…IGPPPLPDRY (81 aa). Pro-75 and Pro-78 each carry hydroxyproline. Pro-78 carries an O-linked (Ara...) hydroxyproline glycan.

Belongs to the CLV3/ESR signal peptide family. In terms of processing, the O-glycosylation (arabinosylation) of the hydroxyproline Pro-78 enhances binding affinity of the ESR3p peptide for its receptor. As to expression, seed endosperm.

It is found in the secreted. The protein localises to the extracellular space. In terms of biological role, extracellular signal peptide that regulates cell fate. This Zea mays (Maize) protein is CLAVATA3/ESR (CLE)-related protein ESR3.